Here is a 413-residue protein sequence, read N- to C-terminus: S-adenosylmethionine synthase (413 aa).

His15 contacts ATP. Asp17 contributes to the Mg(2+) binding site. K(+) is bound at residue Glu43. 2 residues coordinate L-methionine: Glu56 and Gln100. The tract at residues 100 to 110 is flexible loop; the sequence is QSPDISQGVNE. ATP-binding positions include 171–173, 248–249, Asp257, 263–264, Ala280, and Lys284; these read DGK, KF, and RK. Asp257 lines the L-methionine pocket. Position 288 (Lys288) interacts with L-methionine.

It belongs to the AdoMet synthase family. In terms of assembly, homotetramer; dimer of dimers. Mg(2+) is required as a cofactor. It depends on K(+) as a cofactor.

It is found in the cytoplasm. The catalysed reaction is L-methionine + ATP + H2O = S-adenosyl-L-methionine + phosphate + diphosphate. It participates in amino-acid biosynthesis; S-adenosyl-L-methionine biosynthesis; S-adenosyl-L-methionine from L-methionine: step 1/1. Catalyzes the formation of S-adenosylmethionine (AdoMet) from methionine and ATP. The overall synthetic reaction is composed of two sequential steps, AdoMet formation and the subsequent tripolyphosphate hydrolysis which occurs prior to release of AdoMet from the enzyme. This Prochlorococcus marinus (strain MIT 9215) protein is S-adenosylmethionine synthase.